The following is a 337-amino-acid chain: 2-oxoglutarate-dependent ethylene/succinate-forming enzyme (337 aa).

The 121-residue stretch at 166-286 (GWHHMRVLRF…RFACAYFHEP (121 aa)) folds into the Fe2OG dioxygenase domain. His189 and His268 together coordinate Fe cation.

The protein belongs to the iron/ascorbate-dependent oxidoreductase family. As to quaternary structure, monomer. The cofactor is Fe(2+).

The catalysed reaction is 2-oxoglutarate + O2 + 2 H(+) = ethene + 3 CO2 + H2O. It catalyses the reaction L-arginine + 2-oxoglutarate + O2 = guanidine + L-glutamate 5-semialdehyde + succinate + CO2. It participates in alkene biosynthesis; ethylene biosynthesis via 2-oxoglutarate. Its function is as follows. Simultaneously catalyzes two reactions, namely formation of ethylene and of succinate from 2-oxoglutarate. In Pseudomonas syringae pv. pisi, this protein is 2-oxoglutarate-dependent ethylene/succinate-forming enzyme (efe).